We begin with the raw amino-acid sequence, 511 residues long: ATP synthase subunit alpha 1 (511 aa).

Residue Gly170–Thr177 participates in ATP binding.

The protein belongs to the ATPase alpha/beta chains family. In terms of assembly, F-type ATPases have 2 components, CF(1) - the catalytic core - and CF(0) - the membrane proton channel. CF(1) has five subunits: alpha(3), beta(3), gamma(1), delta(1), epsilon(1). CF(0) has three main subunits: a(1), b(2) and c(9-12). The alpha and beta chains form an alternating ring which encloses part of the gamma chain. CF(1) is attached to CF(0) by a central stalk formed by the gamma and epsilon chains, while a peripheral stalk is formed by the delta and b chains.

It is found in the cell inner membrane. The catalysed reaction is ATP + H2O + 4 H(+)(in) = ADP + phosphate + 5 H(+)(out). Produces ATP from ADP in the presence of a proton gradient across the membrane. The alpha chain is a regulatory subunit. This is ATP synthase subunit alpha 1 from Gluconobacter oxydans (strain 621H) (Gluconobacter suboxydans).